Reading from the N-terminus, the 238-residue chain is MSEAYRQPVLGVIGGSGVYDIDGLEGARWQTVESPFGDVSDQILRGTLDGLEMAFLPRHGRGHVLAPSDVNYRANIDALKRAGVTEILSVSAVGSLAEDLPPGTFVIADQFIDRTFAREKSFFRQGSGRPCQHGPSGQRLAGRSRRRGSGRSGHSPSPGRHLSVHGGAAVLDPGRKQSLSAMGLPRHRHDQHARGQAGPRSRDRLLHRGHGHRFRLLAPRSRPRQRRGGGSRAAAKRR.

Disordered stretches follow at residues 123–167 (FRQG…VHGG) and 180–238 (SAMG…AKRR). The segment covering 152 to 161 (SGHSPSPGRH) has biased composition (low complexity). Over residues 207–238 (HRGHGHRFRLLAPRSRPRQRRGGGSRAAAKRR) the composition is skewed to basic residues.

Belongs to the PNP/MTAP phosphorylase family.

This is an uncharacterized protein from Rhodospirillum rubrum.